Consider the following 375-residue polypeptide: Pectate lyase C (375 aa).

The N-terminal stretch at Met-1–Ala-22 is a signal peptide. Cys-94 and Cys-177 are joined by a disulfide. Ca(2+) is bound by residues Asp-151, Asp-153, Glu-188, and Asp-192. The active site involves Arg-240. Residues Cys-351 and Cys-374 are joined by a disulfide bond.

Belongs to the polysaccharide lyase 1 family. PLADES subfamily. It depends on Ca(2+) as a cofactor.

Its subcellular location is the secreted. The catalysed reaction is Eliminative cleavage of (1-&gt;4)-alpha-D-galacturonan to give oligosaccharides with 4-deoxy-alpha-D-galact-4-enuronosyl groups at their non-reducing ends.. It functions in the pathway glycan metabolism; pectin degradation; 2-dehydro-3-deoxy-D-gluconate from pectin: step 2/5. Its function is as follows. Involved in maceration and soft-rotting of plant tissue. The protein is Pectate lyase C of Dickeya chrysanthemi (Pectobacterium chrysanthemi).